Here is a 617-residue protein sequence, read N- to C-terminus: COMPASS component cclA (617 aa).

Composition is skewed to low complexity over residues 1-19 (MASIQPAGSSAPSSNINSP) and 40-50 (SSPAPASNASA). Residues 1–89 (MASIQPAGSS…AKKRATAVQN (89 aa)) form a disordered region. The segment covering 57 to 69 (SKRNKRDSRKKRE) has biased composition (basic residues). Positions 157–380 (IADTSFPHIK…YAFNLKETPT (224 aa)) constitute a B30.2/SPRY domain. Residues 595-617 (TPNTEEPAARPENITVGHDVEMS) form a disordered region.

This sequence belongs to the cclA family. As to quaternary structure, component of the COMPASS complex.

The protein localises to the nucleus. It localises to the chromosome. Its subcellular location is the telomere. Component of the COMPASS (Set1C) complex that specifically mono-, di- and trimethylates histone H3 to form H3K4me1/2/3, which subsequently plays a role in telomere length maintenance and transcription elongation regulation. Controls the production of several secondary metabolites, including astellolides. The protein is COMPASS component cclA of Aspergillus oryzae (strain ATCC 42149 / RIB 40) (Yellow koji mold).